The following is a 394-amino-acid chain: 1-deoxy-D-xylulose 5-phosphate reductoisomerase (394 aa).

NADPH-binding residues include T12, G13, S14, I15, K39, Q40, and N126. K127 contacts 1-deoxy-D-xylulose 5-phosphate. Position 128 (E128) interacts with NADPH. D152 is a binding site for Mn(2+). 1-deoxy-D-xylulose 5-phosphate is bound by residues S153, E154, S183, and H206. E154 serves as a coordination point for Mn(2+). Residue G212 participates in NADPH binding. The 1-deoxy-D-xylulose 5-phosphate site is built by S219, N224, K225, and E228. Mn(2+) is bound at residue E228.

The protein belongs to the DXR family. The cofactor is Mg(2+). Mn(2+) is required as a cofactor.

It catalyses the reaction 2-C-methyl-D-erythritol 4-phosphate + NADP(+) = 1-deoxy-D-xylulose 5-phosphate + NADPH + H(+). It functions in the pathway isoprenoid biosynthesis; isopentenyl diphosphate biosynthesis via DXP pathway; isopentenyl diphosphate from 1-deoxy-D-xylulose 5-phosphate: step 1/6. Functionally, catalyzes the NADPH-dependent rearrangement and reduction of 1-deoxy-D-xylulose-5-phosphate (DXP) to 2-C-methyl-D-erythritol 4-phosphate (MEP). The sequence is that of 1-deoxy-D-xylulose 5-phosphate reductoisomerase from Neisseria gonorrhoeae (strain ATCC 700825 / FA 1090).